The primary structure comprises 182 residues: Ribosome-recycling factor (182 aa).

The segment at 136-158 (IKKQEKEGDLSEDQSRDEQDQVQ) is disordered.

The protein belongs to the RRF family.

Its subcellular location is the cytoplasm. Its function is as follows. Responsible for the release of ribosomes from messenger RNA at the termination of protein biosynthesis. May increase the efficiency of translation by recycling ribosomes from one round of translation to another. This is Ribosome-recycling factor from Synechococcus sp. (strain CC9311).